Here is a 228-residue protein sequence, read N- to C-terminus: 7-cyano-7-deazaguanine synthase (228 aa).

An ATP-binding site is contributed by 13–23; that stretch reads LSGGMDSTLSS. Cys-192, Cys-200, Cys-203, and Cys-206 together coordinate Zn(2+).

This sequence belongs to the QueC family. Requires Zn(2+) as cofactor.

The enzyme catalyses 7-carboxy-7-deazaguanine + NH4(+) + ATP = 7-cyano-7-deazaguanine + ADP + phosphate + H2O + H(+). It participates in purine metabolism; 7-cyano-7-deazaguanine biosynthesis. Its function is as follows. Catalyzes the ATP-dependent conversion of 7-carboxy-7-deazaguanine (CDG) to 7-cyano-7-deazaguanine (preQ(0)). This Aliarcobacter butzleri (strain RM4018) (Arcobacter butzleri) protein is 7-cyano-7-deazaguanine synthase.